Consider the following 178-residue polypeptide: GTP-dependent dephospho-CoA kinase (178 aa).

Residues Asp55, Val57, Asp74, Lys76, and Glu127 each coordinate GTP.

Belongs to the GTP-dependent DPCK family.

The catalysed reaction is 3'-dephospho-CoA + GTP = GDP + CoA + H(+). The protein operates within cofactor biosynthesis; coenzyme A biosynthesis. In terms of biological role, catalyzes the GTP-dependent phosphorylation of the 3'-hydroxyl group of dephosphocoenzyme A to form coenzyme A (CoA). The polypeptide is GTP-dependent dephospho-CoA kinase (Saccharolobus islandicus (strain Y.N.15.51 / Yellowstone #2) (Sulfolobus islandicus)).